Here is a 210-residue protein sequence, read N- to C-terminus: MKRNGILFVISAPSGAGKTSLCRQIVDIFPDMRHSISFTTRPRRNGETDGVDYHFVTPEVFDTMVAEGAFAEWARVHGNCYGTALATLQEAREQGQDLLLDIDCQGAAQLKRNCPDDVFIFILPPSFEELERRLRGRNTDTAEVIARRLDNARREIRELVWYDYLIVNEDLPRAVEEFKSIILAEGCRASRIRSEAGRLFDIDMQDNSTI.

The 179-residue stretch at 5-183 folds into the Guanylate kinase-like domain; the sequence is GILFVISAPS…AVEEFKSIIL (179 aa). 12–19 lines the ATP pocket; it reads APSGAGKT.

This sequence belongs to the guanylate kinase family.

It localises to the cytoplasm. It catalyses the reaction GMP + ATP = GDP + ADP. In terms of biological role, essential for recycling GMP and indirectly, cGMP. The sequence is that of Guanylate kinase from Syntrophotalea carbinolica (strain DSM 2380 / NBRC 103641 / GraBd1) (Pelobacter carbinolicus).